The following is a 157-amino-acid chain: SsrA-binding protein (157 aa).

Residues 133–157 are disordered; it reads LHDKRETEKKRDWSREKSRLLRARG. The span at 135-151 shows a compositional bias: basic and acidic residues; that stretch reads DKRETEKKRDWSREKSR.

This sequence belongs to the SmpB family.

The protein localises to the cytoplasm. Functionally, required for rescue of stalled ribosomes mediated by trans-translation. Binds to transfer-messenger RNA (tmRNA), required for stable association of tmRNA with ribosomes. tmRNA and SmpB together mimic tRNA shape, replacing the anticodon stem-loop with SmpB. tmRNA is encoded by the ssrA gene; the 2 termini fold to resemble tRNA(Ala) and it encodes a 'tag peptide', a short internal open reading frame. During trans-translation Ala-aminoacylated tmRNA acts like a tRNA, entering the A-site of stalled ribosomes, displacing the stalled mRNA. The ribosome then switches to translate the ORF on the tmRNA; the nascent peptide is terminated with the 'tag peptide' encoded by the tmRNA and targeted for degradation. The ribosome is freed to recommence translation, which seems to be the essential function of trans-translation. The sequence is that of SsrA-binding protein from Afipia carboxidovorans (strain ATCC 49405 / DSM 1227 / KCTC 32145 / OM5) (Oligotropha carboxidovorans).